The sequence spans 397 residues: MTPSQWLDIAVLAVAFIAAISGWRAGALGSMLSFGGVLLGATAGVLLAPHIVSQISAPRAKLFAALFLILALVVVGEVAGVVLGRAVRGAIRNRPIRLIDSVIGVGVQLVVVLTAAWLLAMPLTQSKEQPELAAAVKGSRVLARVNEAAPTWLKTVPKRLSALLNTSGLPAVLEPFSRTPVIPVASPDPALVNNPVVAATEPSVVKIRSLAPRCQKVLEGTGFVISPDRVMTNAHVVAGSNNVTVYAGDKPFEATVVSYDPSVDVAILAVPHLPPPPLVFAAEPAKTGADVVVLGYPGGGNFTATPARIREAIRLSGPDIYGDPEPVTRDVYTIRADVEQGDSGGPLIDLNGQVLGVVFGAAIDDAETGFVLTAGEVAGQLAKIGATQPVGTGACVS.

4 helical membrane-spanning segments follow: residues 9-29 (IAVL…GALG), 32-52 (LSFG…PHIV), 62-82 (LFAA…AGVV), and 102-122 (VIGV…LAMP). The cysteines at positions 214 and 395 are disulfide-linked. The active-site Proton acceptor is H235. Residue D264 is part of the active site. S343 acts as the Charge relay system in catalysis.

It belongs to the peptidase S1C family. As to quaternary structure, monomer.

Its subcellular location is the membrane. Required for M.tuberculosis resistance to oxidative stress in addition to its role in resistance to acid, which is essential for virulence. The chain is Serine protease MT3772 from Mycobacterium tuberculosis (strain CDC 1551 / Oshkosh).